Reading from the N-terminus, the 84-residue chain is Mitochondrial import inner membrane translocase subunit tim9 (84 aa).

Positions 35 to 59 match the Twin CX3C motif motif; sequence CFSDCVQDFTSSKLSNKESECIAKC. Disulfide bonds link C35/C59 and C39/C55.

The protein belongs to the small Tim family. In terms of assembly, heterohexamer; composed of 3 copies of TIM9 and 3 copies of TIM10, named soluble 70 kDa complex. Associates with the TIM22 complex, whose core is composed of TIM22 and TIM54. Interacts with the transmembrane regions of multi-pass transmembrane proteins in transit.

Its subcellular location is the mitochondrion inner membrane. In terms of biological role, mitochondrial intermembrane chaperone that participates in the import and insertion of multi-pass transmembrane proteins into the mitochondrial inner membrane. Also required for the transfer of beta-barrel precursors from the TOM complex to the sorting and assembly machinery (SAM complex) of the outer membrane. Acts as a chaperone-like protein that protects the hydrophobic precursors from aggregation and guide them through the mitochondrial intermembrane space. The protein is Mitochondrial import inner membrane translocase subunit tim9 (tim9) of Schizosaccharomyces pombe (strain 972 / ATCC 24843) (Fission yeast).